The chain runs to 211 residues: Homeobox protein Rhox5 (211 aa).

Residues 38-129 form a disordered region; that stretch reads FFQAGEGRDE…PLRRPGSTQR (92 aa). Gly residues-rich tracts occupy residues 52–62 and 70–84; these read GQPGEGAVGTE and GGEGHFGPGVPGPVG. The span at 102–119 shows a compositional bias: basic and acidic residues; sequence HEPVAEGTESVKSEDKQM. The homeobox; atypical DNA-binding region spans 119–176; it reads MPLRRPGSTQRRLAELERILLSSGSSSGGRSLIDGWISVCPECRNWFKIRRAAYRRNR.

As to expression, highly expressed in placenta. Lower levels in testis, epididymis, ovary and skeletal muscle.

It is found in the nucleus. Functionally, transcription factor required for differentiation of embryonic stem cells (ESCs) into primordial germ cells. The sequence is that of Homeobox protein Rhox5 (Rhox5) from Rattus norvegicus (Rat).